A 244-amino-acid polypeptide reads, in one-letter code: Tyrosine recombinase XerD-like (244 aa).

The region spanning 1-73 (MRDRISAFLE…ACNQFLYFLY (73 aa)) is the Core-binding (CB) domain. The Tyr recombinase domain maps to 90-244 (AEKKTEKPEI…KTVLTLEKYR (155 aa)). Catalysis depends on residues K150 and R211. Y243 functions as the O-(3'-phospho-DNA)-tyrosine intermediate in the catalytic mechanism.

This sequence belongs to the 'phage' integrase family. XerD-like subfamily.

Its subcellular location is the cytoplasm. Its function is as follows. Putative tyrosine recombinase. Not involved in the cutting and rejoining of the recombining DNA molecules on dif(SL) site. The chain is Tyrosine recombinase XerD-like from Streptococcus pneumoniae (strain Hungary19A-6).